A 624-amino-acid chain; its full sequence is Phosphomethylpyrimidine synthase (624 aa).

The segment at 75-99 (SPWIESRGDTESYTGRTPFALDDGL) is disordered. Residues Asn-226, Met-255, Tyr-284, His-320, 340-342 (SRG), 381-384 (DGLR), and Glu-420 contribute to the substrate site. His-424 contacts Zn(2+). Residue Tyr-447 coordinates substrate. His-488 is a binding site for Zn(2+). Residues Cys-568, Cys-571, and Cys-576 each contribute to the [4Fe-4S] cluster site.

It belongs to the ThiC family. As to quaternary structure, homodimer. Requires [4Fe-4S] cluster as cofactor.

It carries out the reaction 5-amino-1-(5-phospho-beta-D-ribosyl)imidazole + S-adenosyl-L-methionine = 4-amino-2-methyl-5-(phosphooxymethyl)pyrimidine + CO + 5'-deoxyadenosine + formate + L-methionine + 3 H(+). The protein operates within cofactor biosynthesis; thiamine diphosphate biosynthesis. Catalyzes the synthesis of the hydroxymethylpyrimidine phosphate (HMP-P) moiety of thiamine from aminoimidazole ribotide (AIR) in a radical S-adenosyl-L-methionine (SAM)-dependent reaction. The protein is Phosphomethylpyrimidine synthase of Albidiferax ferrireducens (strain ATCC BAA-621 / DSM 15236 / T118) (Rhodoferax ferrireducens).